A 335-amino-acid polypeptide reads, in one-letter code: S-adenosylmethionine:tRNA ribosyltransferase-isomerase (335 aa).

The protein belongs to the QueA family. As to quaternary structure, monomer.

Its subcellular location is the cytoplasm. The enzyme catalyses 7-aminomethyl-7-carbaguanosine(34) in tRNA + S-adenosyl-L-methionine = epoxyqueuosine(34) in tRNA + adenine + L-methionine + 2 H(+). It participates in tRNA modification; tRNA-queuosine biosynthesis. Functionally, transfers and isomerizes the ribose moiety from AdoMet to the 7-aminomethyl group of 7-deazaguanine (preQ1-tRNA) to give epoxyqueuosine (oQ-tRNA). The sequence is that of S-adenosylmethionine:tRNA ribosyltransferase-isomerase from Thermotoga petrophila (strain ATCC BAA-488 / DSM 13995 / JCM 10881 / RKU-1).